We begin with the raw amino-acid sequence, 44 residues long: Putative keratin-associated protein 20-4 (44 aa).

The protein belongs to the KRTAP type 20 family. In terms of assembly, interacts with hair keratins.

In the hair cortex, hair keratin intermediate filaments are embedded in an interfilamentous matrix, consisting of hair keratin-associated proteins (KRTAP), which are essential for the formation of a rigid and resistant hair shaft through their extensive disulfide bond cross-linking with abundant cysteine residues of hair keratins. The matrix proteins include the high-sulfur and high-glycine-tyrosine keratins. This chain is Putative keratin-associated protein 20-4 (KRTAP20-4), found in Homo sapiens (Human).